Here is a 272-residue protein sequence, read N- to C-terminus: Ras-related protein RSR1 (272 aa).

Residue 10–17 coordinates GTP; the sequence is GAGGVGKS. Residues 32-40 carry the Effector region motif; sequence YDPTIEDSY. GTP contacts are provided by residues 57 to 61 and 116 to 119; these read DTAGI and NKAD. The segment at 177 to 272 is disordered; sequence DARNQSQQFS…KKNASTCTIL (96 aa). Polar residues-rich tracts occupy residues 180–232 and 245–258; these read NQSQ…STPV and SGSS…ATSQ. Cysteine methyl ester is present on Cys269. Residue Cys269 is the site of S-geranylgeranyl cysteine attachment. Residues 270-272 constitute a propeptide, removed in mature form; sequence TIL.

The protein belongs to the small GTPase superfamily. Ras family.

It localises to the cell membrane. It carries out the reaction GTP + H2O = GDP + phosphate + H(+). Its activity is regulated as follows. Alternates between an inactive form bound to GDP and an active form bound to GTP. Activated by a guanine nucleotide-exchange factor (GEF) and inactivated by a GTPase-activating protein (GAP). Ras-related protein which binds GDP/GTP and possesses intrinsic GTPase activity. Involved in development of cell polarity during the cell division cycle, and essential for bud emergence. The chain is Ras-related protein RSR1 from Saccharomyces cerevisiae (strain ATCC 204508 / S288c) (Baker's yeast).